Reading from the N-terminus, the 332-residue chain is DNA-directed RNA polymerase subunit alpha (332 aa).

The segment at 2–234 is alpha N-terminal domain (alpha-NTD); the sequence is TVTANQVLRP…DQLSVFGDFT (233 aa). Positions 248-332 are alpha C-terminal domain (alpha-CTD); sequence VDPVLLRPID…AGVAQHGMLG (85 aa).

This sequence belongs to the RNA polymerase alpha chain family. In terms of assembly, homodimer. The RNAP catalytic core consists of 2 alpha, 1 beta, 1 beta' and 1 omega subunit. When a sigma factor is associated with the core the holoenzyme is formed, which can initiate transcription.

It carries out the reaction RNA(n) + a ribonucleoside 5'-triphosphate = RNA(n+1) + diphosphate. DNA-dependent RNA polymerase catalyzes the transcription of DNA into RNA using the four ribonucleoside triphosphates as substrates. This chain is DNA-directed RNA polymerase subunit alpha, found in Xanthomonas axonopodis pv. citri (strain 306).